The chain runs to 118 residues: Small ribosomal subunit protein uS13 (118 aa).

A disordered region spans residues Gly94–Lys118.

It belongs to the universal ribosomal protein uS13 family. Part of the 30S ribosomal subunit. Forms a loose heterodimer with protein S19. Forms two bridges to the 50S subunit in the 70S ribosome.

Functionally, located at the top of the head of the 30S subunit, it contacts several helices of the 16S rRNA. In the 70S ribosome it contacts the 23S rRNA (bridge B1a) and protein L5 of the 50S subunit (bridge B1b), connecting the 2 subunits; these bridges are implicated in subunit movement. Contacts the tRNAs in the A and P-sites. The polypeptide is Small ribosomal subunit protein uS13 (Shigella dysenteriae serotype 1 (strain Sd197)).